Here is a 918-residue protein sequence, read N- to C-terminus: Protein translocase subunit SecA (918 aa).

ATP-binding positions include Gln-87, Gly-105 to Thr-109, and Asp-500. Residues Ala-876–Arg-918 form a disordered region. Cys-902, Cys-904, Cys-913, and His-914 together coordinate Zn(2+). Residues Lys-908–Arg-918 show a composition bias toward basic residues.

It belongs to the SecA family. Monomer and homodimer. Part of the essential Sec protein translocation apparatus which comprises SecA, SecYEG and auxiliary proteins SecDF-YajC and YidC. It depends on Zn(2+) as a cofactor.

The protein resides in the cell inner membrane. Its subcellular location is the cytoplasm. It catalyses the reaction ATP + H2O + cellular proteinSide 1 = ADP + phosphate + cellular proteinSide 2.. In terms of biological role, part of the Sec protein translocase complex. Interacts with the SecYEG preprotein conducting channel. Has a central role in coupling the hydrolysis of ATP to the transfer of proteins into and across the cell membrane, serving both as a receptor for the preprotein-SecB complex and as an ATP-driven molecular motor driving the stepwise translocation of polypeptide chains across the membrane. The protein is Protein translocase subunit SecA of Rhodospirillum centenum (strain ATCC 51521 / SW).